A 326-amino-acid polypeptide reads, in one-letter code: Ketol-acid reductoisomerase (NADP(+)) (326 aa).

Residues 2-182 enclose the KARI N-terminal Rossmann domain; it reads AKIYGDEDAS…GFTRAGVIKT (181 aa). Residues 25–28, Arg-48, Ser-53, and 83–86 each bind NADP(+); these read YGSQ and DEVQ. The active site involves His-108. Gly-134 contributes to the NADP(+) binding site. One can recognise a KARI C-terminal knotted domain in the interval 183–325; it reads TFREEVETDL…ERLRKMMGFE (143 aa). Residues Asp-191, Glu-195, Glu-227, and Glu-231 each coordinate Mg(2+). Ser-252 is a substrate binding site.

This sequence belongs to the ketol-acid reductoisomerase family. It depends on Mg(2+) as a cofactor.

It carries out the reaction (2R)-2,3-dihydroxy-3-methylbutanoate + NADP(+) = (2S)-2-acetolactate + NADPH + H(+). The enzyme catalyses (2R,3R)-2,3-dihydroxy-3-methylpentanoate + NADP(+) = (S)-2-ethyl-2-hydroxy-3-oxobutanoate + NADPH + H(+). Its pathway is amino-acid biosynthesis; L-isoleucine biosynthesis; L-isoleucine from 2-oxobutanoate: step 2/4. It participates in amino-acid biosynthesis; L-valine biosynthesis; L-valine from pyruvate: step 2/4. Involved in the biosynthesis of branched-chain amino acids (BCAA). Catalyzes an alkyl-migration followed by a ketol-acid reduction of (S)-2-acetolactate (S2AL) to yield (R)-2,3-dihydroxy-isovalerate. In the isomerase reaction, S2AL is rearranged via a Mg-dependent methyl migration to produce 3-hydroxy-3-methyl-2-ketobutyrate (HMKB). In the reductase reaction, this 2-ketoacid undergoes a metal-dependent reduction by NADPH to yield (R)-2,3-dihydroxy-isovalerate. This is Ketol-acid reductoisomerase (NADP(+)) from Methanopyrus kandleri (strain AV19 / DSM 6324 / JCM 9639 / NBRC 100938).